The primary structure comprises 404 residues: Zinc transporter 10 (404 aa).

Residues 1-22 form the signal peptide; sequence MESSSSSSYIPFIRQIAASVSA. Over 23–49 the chain is Extracellular; that stretch reads ASCDAVVGGGGDKDEECRDEAAALRLK. Residues 50 to 70 traverse the membrane as a helical segment; it reads MVAVAAILIAGAAGVAIPLVG. The Cytoplasmic portion of the chain corresponds to 71–86; sequence RRRRGGGGGGGGGASS. Residues 87–107 form a helical membrane-spanning segment; the sequence is GGLFVLAKAFAAGVILATGFV. The Extracellular portion of the chain corresponds to 108–129; sequence HMLHDAEHALSNPCLPHSPWRR. Residues 130-150 traverse the membrane as a helical segment; that stretch reads FPFPGFVAMLAALATLVVDFV. Over 151–248 the chain is Cytoplasmic; that stretch reads GTHFYERKHR…GHEEGPSARH (98 aa). Residues 249-269 traverse the membrane as a helical segment; sequence VVVSQILELGIVSHSVIIGLS. Over 270–280 the chain is Extracellular; the sequence is LGVSQSPCTIK. A helical membrane pass occupies residues 281–301; that stretch reads PLVAALSFHQFFEGFALGGCI. Topologically, residues 302 to 311 are cytoplasmic; it reads SEAQLKNFSA. The helical transmembrane segment at 312–332 threads the bilayer; the sequence is FLMAFFFAITTPAGITVGAAV. The Extracellular segment spans residues 333–343; the sequence is ASFYNPNSPRA. Residues 344–364 traverse the membrane as a helical segment; it reads LVVEGILDSMSAGILIYMALV. Over 365–383 the chain is Cytoplasmic; it reads DLIAADFLSRKMSCNPRLQ. The helical transmembrane segment at 384-404 threads the bilayer; sequence VGSYIALFLGAMAMAALALWA.

The protein belongs to the ZIP transporter (TC 2.A.5) family.

Its subcellular location is the cell membrane. In terms of biological role, zinc transporter that may be involved in zinc uptake from the rhizosphere. In Oryza sativa subsp. japonica (Rice), this protein is Zinc transporter 10 (ZIP10).